We begin with the raw amino-acid sequence, 766 residues long: MKLATKKIKTLGKSKPDLSKKKPAKDAIRKTKPQTTSETKVTPRNPKQKVAEPVKNGKTTKKGFKKSHKEELEGLKDIDPEFYDFLKNNDKKLLDFNLLDTDDDDDEEGDEEDKEDTVTKESKDDEDDEEKYHKPSKDLEVASDESDFEVDEEDDAAAGGIQKITLNLLHQWEQQLGQANISIDIVRKVIQAFNSALASISADGADGGENKHNAAAFKVVGAAAFNGVIQLCVIHLQPAIIRLLGVRPNSSLPLHKHKKWVKVRGCLRYYLTDLIRLVEQVSSPNILGVLLKHLHQMAGMVVPFSALGKTILKRLVVLWSTGDETVRVLAFLCILKITRKQQATMLNHVLKAMYLAYVRNSKFVSPNTLPGINFMRRSLVEMFALDLNVSYQHVFLYIRQLAIHLRNAVILKKKDSFQAVYNWQFINSLRLWADLLGASANKPQLQPLIYPLVTIATGVIRLIPTAQYFPLRFHCLQTLISLAKETNTYVPVLPLIVEVLKSNTFNRKHSAVSMKPVQFTCVLRLNKGQLAENGFRDEVIEQVCGLLLEYLAHESTSLAFSDLVVPTVMAIKTYLKECRNANYARKLKQLLEKIQESARFIEQQRGKSSVTFDIKDAQAVAAWEQQLRLKRTPLDVYYASWLKTHETKKRRQAAHTDEINADYDVPKLKKLPVKTGVPVRNENGEVELFPSDSEDEGDDGLHLGSDDDDDEDVQEEEEVEVEHPKAKKAKKEKPEKQKPRPATVEDDYDEAGGAVDIVKDLDLNEW.

The span at 1 to 12 shows a compositional bias: basic residues; that stretch reads MKLATKKIKTLG. Disordered stretches follow at residues 1–73, 100–154, and 674–766; these read MKLA…EELE, DTDD…DEED, and KTGV…LNEW. Residues 14 to 29 are compositionally biased toward basic and acidic residues; it reads SKPDLSKKKPAKDAIR. A compositionally biased stretch (polar residues) spans 33-42; sequence PQTTSETKVT. Positions 58–67 are enriched in basic residues; the sequence is KTTKKGFKKS. Over residues 100–115 the composition is skewed to acidic residues; it reads DTDDDDDEEGDEEDKE. At T101 the chain carries Phosphothreonine. Residues 130 to 140 are compositionally biased toward basic and acidic residues; it reads EKYHKPSKDLE. The segment covering 141–154 has biased composition (acidic residues); sequence VASDESDFEVDEED. Residues S143, S146, S691, S693, and S705 each carry the phosphoserine modification. Residues 706–720 are compositionally biased toward acidic residues; the sequence is DDDDDEDVQEEEEVE. Basic and acidic residues predominate over residues 757–766; the sequence is IVKDLDLNEW.

Belongs to the NOC2 family.

It localises to the nucleus. The chain is Nucleolar complex protein 2 from Drosophila melanogaster (Fruit fly).